We begin with the raw amino-acid sequence, 543 residues long: CTP synthase (543 aa).

Residues 1–265 (MARYIFITGG…DGEVLRHFGL (265 aa)) are amidoligase domain. Residue serine 13 coordinates CTP. Serine 13 provides a ligand contact to UTP. 14–19 (SLGKGL) is a binding site for ATP. Position 54 (tyrosine 54) interacts with L-glutamine. Position 71 (aspartate 71) interacts with ATP. Positions 71 and 139 each coordinate Mg(2+). CTP is bound by residues 146 to 148 (DIE), 186 to 191 (KTKPTQ), and lysine 222. UTP is bound by residues 186 to 191 (KTKPTQ) and lysine 222. The Glutamine amidotransferase type-1 domain maps to 290 to 542 (TIGVVGKYVG…IAAAVKQARL (253 aa)). Glycine 354 contacts L-glutamine. The Nucleophile; for glutamine hydrolysis role is filled by cysteine 381. Residues 382-385 (LGMQ), glutamate 405, and arginine 470 contribute to the L-glutamine site. Catalysis depends on residues histidine 515 and glutamate 517.

It belongs to the CTP synthase family. Homotetramer.

The enzyme catalyses UTP + L-glutamine + ATP + H2O = CTP + L-glutamate + ADP + phosphate + 2 H(+). It carries out the reaction L-glutamine + H2O = L-glutamate + NH4(+). It catalyses the reaction UTP + NH4(+) + ATP = CTP + ADP + phosphate + 2 H(+). It functions in the pathway pyrimidine metabolism; CTP biosynthesis via de novo pathway; CTP from UDP: step 2/2. With respect to regulation, allosterically activated by GTP, when glutamine is the substrate; GTP has no effect on the reaction when ammonia is the substrate. The allosteric effector GTP functions by stabilizing the protein conformation that binds the tetrahedral intermediate(s) formed during glutamine hydrolysis. Inhibited by the product CTP, via allosteric rather than competitive inhibition. Its function is as follows. Catalyzes the ATP-dependent amination of UTP to CTP with either L-glutamine or ammonia as the source of nitrogen. Regulates intracellular CTP levels through interactions with the four ribonucleotide triphosphates. The chain is CTP synthase from Novosphingobium aromaticivorans (strain ATCC 700278 / DSM 12444 / CCUG 56034 / CIP 105152 / NBRC 16084 / F199).